A 157-amino-acid chain; its full sequence is 2-C-methyl-D-erythritol 2,4-cyclodiphosphate synthase (157 aa).

A divalent metal cation contacts are provided by Asp9 and His11. 4-CDP-2-C-methyl-D-erythritol 2-phosphate is bound by residues 9–11 (DVH) and 35–36 (HS). His43 contacts a divalent metal cation. 4-CDP-2-C-methyl-D-erythritol 2-phosphate contacts are provided by residues 57–59 (DIG), 62–66 (FPDTD), 101–107 (AEKPKMA), 133–136 (TTTE), Phe140, and Arg143.

Belongs to the IspF family. Homotrimer. The cofactor is a divalent metal cation.

The catalysed reaction is 4-CDP-2-C-methyl-D-erythritol 2-phosphate = 2-C-methyl-D-erythritol 2,4-cyclic diphosphate + CMP. It participates in isoprenoid biosynthesis; isopentenyl diphosphate biosynthesis via DXP pathway; isopentenyl diphosphate from 1-deoxy-D-xylulose 5-phosphate: step 4/6. In terms of biological role, involved in the biosynthesis of isopentenyl diphosphate (IPP) and dimethylallyl diphosphate (DMAPP), two major building blocks of isoprenoid compounds. Catalyzes the conversion of 4-diphosphocytidyl-2-C-methyl-D-erythritol 2-phosphate (CDP-ME2P) to 2-C-methyl-D-erythritol 2,4-cyclodiphosphate (ME-CPP) with a corresponding release of cytidine 5-monophosphate (CMP). The chain is 2-C-methyl-D-erythritol 2,4-cyclodiphosphate synthase from Listeria monocytogenes serotype 4b (strain CLIP80459).